Consider the following 1223-residue polypeptide: MMSLSVRPQRRLLSARVNRSQSFAGVLGSHERGPSLSFRSFPVFSPPGPPRKPPALSRVSRMFSVAHPAAKVPQPERLDLVYTALKRGLTAYLEVHQQEQEKLQGQIRESKRNSRLGFLYDLDKQVKSIERFLRRLEFHASKIDELYEAYCVQRRLRDGAYNMVRAYTTGSPGSREARDSLAEATRGHREYTESMCLLESELEAQLGEFHLRMKGLAGFARLCVGDQYEICMKYGRQRWKLRGRIEGSGKQVWDSEETIFLPLLTEFLSIKVTELKGLANHVVVGSVSCETKDLFAALPQVVAVDINDLGTIKLSLEVTWSPFDKDDQPSAASSVNKASTVTKRFSTYSQSPPDTPSLREQAFYNMLRRQEELENGTAWSLSSESSDDSSSPQLSGTARHSPAPRPLVQQPEPLPIQVAFRRPETPSSGPLDEEGAVAPVLANGHAPYSRTLSHISEASVDAALAEASVEAVGPESLAWGPSPPTHPAPTHGEHPSPVPPALDPGHSATSSTLGTTGSVPTSTDPAPSAHLDSVHKSTDSGPSELPGPTHTTTGSTYSAITTTHSAPSPLTHTTTGSTHKPIISTLTTTGPTLNIIGPVQTTTSPTHTMPSPTHTTASPTHTSTSPTHTPTSPTHKTSMSPPTTTSPTPSGMGLVQTATSPTHPTTSPTHPTTSPILINVSPSTSLELATLSSPSKHSDPTLPGTDSLPCSPPVSNSYTQADPMAPRTPHPSPAHSSRKPLTSPAPDPSESTVQSLSPTPSPPTPAPQHSDLCLAMAVQTPVPTAAGGSGDRSLEEALGALMAALDDYRGQFPELQGLEQEVTRLESLLMQRQGLTRSRASSLSITVEHALESFSFLNEDEDEDNDVPGDRPPSSPEAGAEDSIDSPSARPLSTGCPALDAALVRHLYHCSRLLLKLGTFGPLRCQEAWALERLLREARVLEAVCEFSRRWEIPASSAQEVVQFSASRPGFLTFWDQCTERLSCFLCPVERVLLTFCNQYGARLSLRQPGLAEAVCVKFLEDALGQKLPRRPQPGPGEQLTVFQFWSFVETLDSPTMEAYVTETAEEVLLVRNLNSDDQAVVLKALRLAPEGRLRRDGLRALSSLLVHGNNKVMAAVSTQLRSLSLGPTFRERALLCFLDQLEDEDVQTRVAGCLALGCIKAPEGIEPLVYLCQTDTEAVREAARQSLQQCGEEGQSAHRRLEESLDALPRIFGPGSMASTAF.

S22 is modified (phosphoserine). Residues 89-114 (LTAYLEVHQQEQEKLQGQIRESKRNS) are a coiled coil. Residues S349 and S351 each carry the phosphoserine modification. Phosphothreonine is present on T355. The segment at 375-411 (NGTAWSLSSESSDDSSSPQLSGTARHSPAPRPLVQQP) is disordered. Low complexity predominate over residues 380–395 (SLSSESSDDSSSPQLS). Phosphoserine is present on residues S456 and S459. 2 disordered regions span residues 475–769 (ESLA…APQH) and 856–889 (FLNEDEDEDNDVPGDRPPSSPEAGAEDSIDSPSA). Low complexity-rich tracts occupy residues 505 to 523 (GHSATSSTLGTTGSVPTST) and 546 to 564 (PGPTHTTTGSTYSAITTTH). Residues 565 to 592 (SAPSPLTHTTTGSTHKPIISTLTTTGPT) show a composition bias toward polar residues. Low complexity-rich tracts occupy residues 601–650 (TTTS…PTPS) and 659–675 (TSPTHPTTSPTHPTTSP). Residues 680–695 (VSPSTSLELATLSSPS) are compositionally biased toward polar residues. Acidic residues predominate over residues 858 to 867 (NEDEDEDNDV). Phosphoserine is present on residues S874 and S875.

Belongs to the RIPOR family. In terms of assembly, interacts (via N-terminus) with RHOA (GTP-bound form); this interaction links active RHOA to STK24 and STK26 kinases. Interacts with RHOB. Interacts with RHOC. Interacts (via C-terminus) with PDCD10; this interaction occurs in a Rho-independent manner. Interacts (via C-terminus) with STK24; this interaction occurs in a PDCD10-dependent and Rho-independent manner. Interacts (via C-terminus) with STK26; this interaction occurs in a PDCD10-dependent and Rho-independent manner. Interacts (via N-terminus) with 14-3-3 proteins; these interactions occur in a Rho-dependent manner.

Its subcellular location is the cytoplasm. It is found in the golgi apparatus. Functionally, downstream effector protein for Rho-type small GTPases that plays a role in cell polarity and directional migration. Acts as an adapter protein, linking active Rho proteins to STK24 and STK26 kinases, and hence positively regulates Golgi reorientation in polarized cell migration upon Rho activation. Involved in the subcellular relocation of STK26 from the Golgi to cytoplasm punctae in a Rho- and PDCD10-dependent manner upon serum stimulation. This chain is Rho family-interacting cell polarization regulator 1 (RIPOR1), found in Homo sapiens (Human).